The chain runs to 1231 residues: uncharacterized protein (1231 aa).

Disordered stretches follow at residues 171–197 (LKPD…QHDD), 210–259 (DESF…HLPT), and 389–547 (ASPR…RSSR). Positions 440–450 (RSRHSHKRRSI) are enriched in basic residues. Phosphoserine occurs at positions 449, 451, 453, and 455. The span at 458–502 (RGGRRAVRRSRSRSPRRSYNRGSTRSRSRSMRHRSRSPAHYRGRG) shows a compositional bias: basic residues. Positions 503–541 (RGREPASKERGSSSRDFGGRHSLQRERERSSEYYHRNEG) are enriched in basic and acidic residues. A Phosphotyrosine modification is found at Tyr549. 3 disordered regions span residues 570–591 (KTSS…ASEP), 950–981 (PNLD…DDEE), and 1058–1203 (TLSK…PPFN). A phosphoserine mark is found at Ser573 and Ser589. Thr970 is subject to Phosphothreonine. Ser972 bears the Phosphoserine mark. The segment covering 1076 to 1103 (YMMNQQHGAPNAQNAPNLGQNPGQNLGQ) has biased composition (polar residues). Residues 1118–1127 (QQQQQQQQQQ) are compositionally biased toward low complexity. Positions 1178 to 1203 (PPGPGGYVGPPPNPWASNVPPQPPFN) are enriched in pro residues.

This is an uncharacterized protein from Drosophila melanogaster (Fruit fly).